Here is a 124-residue protein sequence, read N- to C-terminus: UPF0102 protein Blon_1698/BLIJ_1758 (124 aa).

It belongs to the UPF0102 family.

This Bifidobacterium longum subsp. infantis (strain ATCC 15697 / DSM 20088 / JCM 1222 / NCTC 11817 / S12) protein is UPF0102 protein Blon_1698/BLIJ_1758.